The following is a 151-amino-acid chain: Deoxyuridine 5'-triphosphate nucleotidohydrolase (151 aa).

Substrate contacts are provided by residues 70–72 (RSG), Asn-83, 87–89 (LID), and Met-97.

The protein belongs to the dUTPase family. Homotrimer. Mg(2+) is required as a cofactor.

It carries out the reaction dUTP + H2O = dUMP + diphosphate + H(+). It functions in the pathway pyrimidine metabolism; dUMP biosynthesis; dUMP from dCTP (dUTP route): step 2/2. Functionally, this enzyme is involved in nucleotide metabolism: it produces dUMP, the immediate precursor of thymidine nucleotides and it decreases the intracellular concentration of dUTP so that uracil cannot be incorporated into DNA. This is Deoxyuridine 5'-triphosphate nucleotidohydrolase from Escherichia coli O45:K1 (strain S88 / ExPEC).